We begin with the raw amino-acid sequence, 334 residues long: MPIRHCIVHLIDKKPDGSPAVLHARDSELAESAAIENMLADLNESYNAKQGKAWGLFHPESGAFPFSGWLKEYLDGGQDFTAFSRVAVEHLQKLMEESNLSVGGHVLFAHYQQGMTDYLAIALLHHSEGVAVTDQLDVTPSRHLDLGQLHLAARINISEWQNNKQSKQYISFIKGKNGKKVSEYFRDFIGCQEGVDGPGETRTLLKAFSDFVESEDLPEDSAREKTKTLVDYASSQAKLGEPMGLEELSELIDEDRPKAFYDHIRNKDYGLSPEIPADKRTLNQFRRFTGRAEGLSISFEAHLLGSKIEYDEEAGTLIIKGLPTQLTDQLKRRN.

This sequence belongs to the YejK family.

The protein resides in the cytoplasm. It is found in the nucleoid. This is Nucleoid-associated protein PFL_1060 from Pseudomonas fluorescens (strain ATCC BAA-477 / NRRL B-23932 / Pf-5).